The chain runs to 142 residues: Hemoglobin subunit alpha (142 aa).

The Globin domain maps to 2 to 142 (VLSSADKNNV…VSTVLTSKYR (141 aa)). A Phosphoserine modification is found at Ser4. Residues Lys8 and Lys12 each carry the N6-succinyllysine modification. Position 17 is an N6-acetyllysine; alternate (Lys17). An N6-succinyllysine; alternate modification is found at Lys17. Phosphotyrosine is present on Tyr25. Ser36 is subject to Phosphoserine. Position 41 is an N6-succinyllysine (Lys41). The residue at position 50 (Ser50) is a Phosphoserine. Residue His59 coordinates O2. Position 88 (His88) interacts with heme b. A Phosphoserine modification is found at Ser103. The residue at position 109 (Thr109) is a Phosphothreonine. Ser125 bears the Phosphoserine mark. A phosphothreonine mark is found at Thr135 and Thr138. Ser139 carries the post-translational modification Phosphoserine.

This sequence belongs to the globin family. As to quaternary structure, heterotetramer of two alpha chains and two beta chains. In terms of tissue distribution, red blood cells.

Its function is as follows. Involved in oxygen transport from the lung to the various peripheral tissues. Functionally, hemopressin acts as an antagonist peptide of the cannabinoid receptor CNR1. Hemopressin-binding efficiently blocks cannabinoid receptor CNR1 and subsequent signaling. The polypeptide is Hemoglobin subunit alpha (HBA) (Panthera onca (Jaguar)).